The primary structure comprises 246 residues: Probable transcriptional regulatory protein ACP_0521 (246 aa).

Belongs to the TACO1 family.

It is found in the cytoplasm. In Acidobacterium capsulatum (strain ATCC 51196 / DSM 11244 / BCRC 80197 / JCM 7670 / NBRC 15755 / NCIMB 13165 / 161), this protein is Probable transcriptional regulatory protein ACP_0521.